A 256-amino-acid chain; its full sequence is Geranylgeranylglyceryl phosphate synthase (256 aa).

2 residues coordinate Mg(2+): Asp28 and Ser53. Residues 172-178, 203-204, and 225-226 each bind sn-glycerol 1-phosphate; these read YLEAGSG, GG, and GT.

Belongs to the GGGP/HepGP synthase family. Group II subfamily. The cofactor is Mg(2+).

It localises to the cytoplasm. The catalysed reaction is sn-glycerol 1-phosphate + (2E,6E,10E)-geranylgeranyl diphosphate = sn-3-O-(geranylgeranyl)glycerol 1-phosphate + diphosphate. It participates in membrane lipid metabolism; glycerophospholipid metabolism. Its function is as follows. Prenyltransferase that catalyzes the transfer of the geranylgeranyl moiety of geranylgeranyl diphosphate (GGPP) to the C3 hydroxyl of sn-glycerol-1-phosphate (G1P). This reaction is the first ether-bond-formation step in the biosynthesis of archaeal membrane lipids. In Methanococcus maripaludis (strain DSM 14266 / JCM 13030 / NBRC 101832 / S2 / LL), this protein is Geranylgeranylglyceryl phosphate synthase.